The following is a 1038-amino-acid chain: Subtilisin-like protease SBT6.1 (1038 aa).

An N-terminal signal peptide occupies residues 1-30 (MKVLGEASSYPYRSCIIVVFLSVSLFWLRP). Residues 31–181 (STYHPQQQNL…TTLNWSRHLL (151 aa)) constitute a propeptide, removed in mature form. Residues Asn44, Asn52, Asn171, and Asn175 are each glycosylated (N-linked (GlcNAc...) asparagine). One can recognise a Peptidase S8 domain in the interval 175–473 (NWSRHLLAQK…VDLLESYEIL (299 aa)). Residues 182–1000 (AQKTQVTSMF…IDMPFLVPTR (819 aa)) are Lumenal-facing. Catalysis depends on Asp212, which acts as the Charge relay system. A glycan (N-linked (GlcNAc...) asparagine) is linked at Asn230. The Charge relay system role is filled by His243. An N-linked (GlcNAc...) asparagine glycan is attached at Asn300. The active-site Charge relay system is the Ser409. Residues Asn513, Asn579, Asn902, and Asn954 are each glycosylated (N-linked (GlcNAc...) asparagine). Residues 1001 to 1021 (WIVLAGVVASGVLVLLSIWRI) form a helical membrane-spanning segment. At 1022 to 1038 (RQKRGRRRRASGSNRLA) the chain is on the cytoplasmic side.

It belongs to the peptidase S8 family. In terms of assembly, interacts with PME1 and PME5. As to expression, expressed in the vasculature of roots, cotyledons and leaves.

The protein localises to the golgi apparatus membrane. Its function is as follows. Serine protease that catalyzes the first step (site-1 cleavage) in the proteolytic activation of various factors, prior to site-2 cleavage. Part of a regulated intramembrane proteolysis (RIP) cascade. Cleaves BZIP17 and BZIP28 after the Arg-Arg-Ile-Leu (RRIL) motif. May cleave BZIP49 after the RRIL motif. Targets the membrane-associated BZIP17 factor, which functions as a stress sensor and transducer in a signaling pathway that resembles an ER stress response. Following salt stress, BZIP17 is cleaved by SBT6.1 (S1P) and S2P at the C-terminus and the N-terminal bZIP component is translocated to the nucleus, where it activates the expression of salt stress response genes. Cleaves the pectinesterases PME1 after the Arg-Arg-Leu-Met (RRLM) and Arg-Arg-Leu-Leu (RRLL) motifs, and PME5 after the Arg-Arg-Leu-Leu (RRLL) and Arg-Lys-Leu-Met (RKLM) motifs. This processing and C-terminus release occurs in the Golgi apparatus and is required for cell wall targeting of pectinesterases. Thus, SBT6.1 mediates the regulated release of mature pectinesterases from the Golgi. Cleaves the peptide growth factor RALF23 after the Arg-Arg-Ile-Leu (RRIL) motif. This processing is required for RALF23 function in the negative regulation of brassinolide (BL)-mediated signaling pathway (e.g. BL-induced hypocotyl elongation and branching limitation). In Arabidopsis thaliana (Mouse-ear cress), this protein is Subtilisin-like protease SBT6.1.